Here is a 294-residue protein sequence, read N- to C-terminus: 4-hydroxy-tetrahydrodipicolinate synthase (294 aa).

Residue threonine 45 participates in pyruvate binding. Residue tyrosine 133 is the Proton donor/acceptor of the active site. The Schiff-base intermediate with substrate role is filled by lysine 161. Isoleucine 203 serves as a coordination point for pyruvate.

It belongs to the DapA family. In terms of assembly, homotetramer; dimer of dimers.

Its subcellular location is the cytoplasm. It catalyses the reaction L-aspartate 4-semialdehyde + pyruvate = (2S,4S)-4-hydroxy-2,3,4,5-tetrahydrodipicolinate + H2O + H(+). The protein operates within amino-acid biosynthesis; L-lysine biosynthesis via DAP pathway; (S)-tetrahydrodipicolinate from L-aspartate: step 3/4. In terms of biological role, catalyzes the condensation of (S)-aspartate-beta-semialdehyde [(S)-ASA] and pyruvate to 4-hydroxy-tetrahydrodipicolinate (HTPA). The polypeptide is 4-hydroxy-tetrahydrodipicolinate synthase (Buchnera aphidicola subsp. Schizaphis graminum (strain Sg)).